The following is a 525-amino-acid chain: MPSNNLIKNALISVSDKKNIVEVAEKLIINKINLFSTGGTAQILKKNNIPVTEISDYTKFPEIMDGRVKTLHPKIMGGILGQKQKDQEIMKLYNICPIDIVIVNFYPFEKIKNIKKNDIDNVVNNIDIGGPTLVRASAKNYKNVIVIVDLDDFQSTIDSINNNTMNIEKRFNLASKAFEYTSYYEQIISQYFIEQNSLYKKTNNSLFPNEINFSFIKKQDLRYGENYHQKSSFYIEKNMCDSGTISTACQIQGKTLSYNNISDSDIALECVKQFTKPACVIVKHGNPCSVAVSHNILESYLSAYNSDPISAFGGIISFNCKLDEKTAQTIINQQFVEVIIIPEISKKAVKILQKKQNIRVLVTGKLQNNTVGLDLKKITNGLLVQEYDSHNIDYNSWSFVTKRSPTKKELKDSIFCWQVAKFVKSNAIVYGSDEITIGIGAGQMSRIYSTKLANIKVKDQGKNIIGATMASDAFFPFRDGIDEAASVGISSIIQPGGSIRDEEIIRAADEHNITMIFTKKRHFKH.

The MGS-like domain occupies 1–148 (MPSNNLIKNA…KNYKNVIVIV (148 aa)).

This sequence belongs to the PurH family.

The catalysed reaction is (6R)-10-formyltetrahydrofolate + 5-amino-1-(5-phospho-beta-D-ribosyl)imidazole-4-carboxamide = 5-formamido-1-(5-phospho-D-ribosyl)imidazole-4-carboxamide + (6S)-5,6,7,8-tetrahydrofolate. It catalyses the reaction IMP + H2O = 5-formamido-1-(5-phospho-D-ribosyl)imidazole-4-carboxamide. It functions in the pathway purine metabolism; IMP biosynthesis via de novo pathway; 5-formamido-1-(5-phospho-D-ribosyl)imidazole-4-carboxamide from 5-amino-1-(5-phospho-D-ribosyl)imidazole-4-carboxamide (10-formyl THF route): step 1/1. The protein operates within purine metabolism; IMP biosynthesis via de novo pathway; IMP from 5-formamido-1-(5-phospho-D-ribosyl)imidazole-4-carboxamide: step 1/1. The chain is Bifunctional purine biosynthesis protein PurH from Buchnera aphidicola subsp. Acyrthosiphon pisum (strain 5A).